The following is a 653-amino-acid chain: Epithelial sodium channel subunit gamma (653 aa).

Residues 1–55 lie on the Cytoplasmic side of the membrane; that stretch reads MAPGEKIKAKIKKNLPVKGPQAPTIKELMRWYCLNTNTHGCRRIVVSPGRLRRLL. A helical transmembrane segment spans residues 56–76; that stretch reads WIAFTLTAVGLIFWQCALLVF. The Extracellular segment spans residues 77–538; that stretch reads SFYTVSVSIK…EMLLSNFGGQ (462 aa). 8 disulfides stabilise this stretch: C100–C287, C211–C218, C264–C271, C376–C461, C398–C457, C402–C453, C411–C438, and C413–C427. Positions 137-225 are gating release of inhibition by proteolysis (GRIP); protease-sensitive region that is responsible for the proteolytic activation of the channel; it reads RKQRDTESWS…SDCATYTFSS (89 aa). N213 is a glycosylation site (N-linked (GlcNAc...) asparagine). N275 carries an N-linked (GlcNAc...) asparagine glycan. N501 carries N-linked (GlcNAc...) asparagine glycosylation. Residues 539 to 559 traverse the membrane as a helical segment; that stretch reads LGLWMSCSVVCVIEIIEVFFI. Residues 560-653 are Cytoplasmic-facing; sequence DSLSIVTRRQ…LADTRLPDEP (94 aa). The segment at 582-632 is disordered; that stretch reads AAPSAEAPSGAQGQENPALEIDDDLPTFTSALSLPPAPGAQVPGTPPPRYN. The short motif at 627 to 631 is the PY motif; recruits WW domain-containing proteins and is thereby required for ubiquitination and inhibition of the channel by NEDD4 and NEDD4L element; sequence PPPRY.

The protein belongs to the amiloride-sensitive sodium channel (TC 1.A.6) family. SCNN1G subfamily. In terms of assembly, component of the heterotrimeric epithelial sodium channel (ENaC) composed of an alpha/SCNN1A, a beta/SCNN1B and a gamma/SCNN1G subunit. Interacts with WWP1 (via WW domains). Interacts with WWP2 (via WW domains); inhibits the channel. Interacts with the full-length immature form of PCSK9 (pro-PCSK9); inhibits ENaC by promoting its proteasomal degradation. Interacts with BPIFA1; the interaction is indirect via SCNN1B and inhibits the proteolytic maturation of SCNN1A and SCNN1G and the activation of ENaC. In terms of processing, phosphorylated on serine and threonine residues. Aldosterone and insulin increase the basal level of phosphorylation. Post-translationally, ubiquitinated. Can be ubiquitinated at multiple sites and undergo monoubiquitination and polyubiquitination. Ubiquitination by NEDD4 or NEDD4L inhibits the ENaC channel through endocytosis, intracellular retention and degradation of its individual subunits. ENaC is activated through the proteolytic maturation of its subunits. Furin cleaves the SCNN1G subunit first, followed by cleavage by prostasin (PRSS8), which results in a stepwise increase in the open probability of the channel due to the release of an inhibitory tract. BPIFA1, which is recruited by the SCNN1B subunit, prevents the proteolytic activation of ENaC. In terms of processing, N-glycosylated. N-linked glycans are processed to complex type during ENaC complex assembly and transport to the plasma membrane.

It localises to the apical cell membrane. It catalyses the reaction Na(+)(in) = Na(+)(out). With respect to regulation, originally identified and characterized by its inhibition by the diuretic drug amiloride. Functionally, this is one of the three pore-forming subunits of the heterotrimeric epithelial sodium channel (ENaC), a critical regulator of sodium balance and fluid homeostasis. ENaC operates in epithelial tissues, where it mediates the electrodiffusion of sodium ions from extracellular fluid through the apical membrane of cells, with water following osmotically. It plays a key role in maintaining sodium homeostasis through electrogenic sodium reabsorption in the kidneys. Additionally, ENaC is essential for airway surface liquid homeostasis, which is crucial for proper mucus clearance. This Oryctolagus cuniculus (Rabbit) protein is Epithelial sodium channel subunit gamma.